A 757-amino-acid polypeptide reads, in one-letter code: 5-methyltetrahydropteroyltriglutamate--homocysteine methyltransferase (757 aa).

5-methyltetrahydropteroyltri-L-glutamate contacts are provided by lysine 18 and asparagine 116. 437–439 serves as a coordination point for L-homocysteine; it reads IGS. Residues 437–439 and glutamate 490 contribute to the L-methionine site; that span reads IGS. 5-methyltetrahydropteroyltri-L-glutamate is bound by residues 521–522 and tryptophan 567; that span reads RC. An L-homocysteine-binding site is contributed by aspartate 605. Aspartate 605 lines the L-methionine pocket. The Zn(2+) site is built by histidine 647, cysteine 649, histidine 658, aspartate 662, and glutamate 671. Histidine 701 acts as the Proton donor in catalysis. Cysteine 733 contacts Zn(2+).

The protein belongs to the vitamin-B12 independent methionine synthase family. It depends on Zn(2+) as a cofactor. Expressed in pollen (at protein level).

The catalysed reaction is 5-methyltetrahydropteroyltri-L-glutamate + L-homocysteine = tetrahydropteroyltri-L-glutamate + L-methionine. Its pathway is amino-acid biosynthesis; L-methionine biosynthesis via de novo pathway; L-methionine from L-homocysteine (MetE route): step 1/1. Catalyzes the transfer of a methyl group from 5-methyltetrahydrofolate to homocysteine resulting in methionine formation. This chain is 5-methyltetrahydropteroyltriglutamate--homocysteine methyltransferase, found in Kali turgidum (Prickly saltwort).